We begin with the raw amino-acid sequence, 483 residues long: Linamarin synthase 1 (483 aa).

Residue histidine 22 is the Proton acceptor of the active site. Histidine 22 contributes to the an anthocyanidin binding site. Residue aspartate 124 is the Charge relay of the active site. UDP-alpha-D-glucose is bound by residues threonine 146, valine 360, glutamine 362, histidine 377, tryptophan 380, asparagine 381, serine 382, and glutamate 385. Position 400 (alanine 400) interacts with an anthocyanidin. 2 residues coordinate UDP-alpha-D-glucose: glutamate 401 and glutamine 402.

It belongs to the UDP-glycosyltransferase family. As to expression, expressed in the cortex, xylem and phloem parenchyma, and in specific cells in the endodermis of the petiole of the first unfolded leaf.

The catalysed reaction is 2-hydroxy-2-methylpropanenitrile + UDP-alpha-D-glucose = linamarin + UDP + H(+). UDP-glucosyltransferase catalyzing in planta synthesis of cyanogenic glucosides. Able to glucosylate acetone cyanohydrin and 2-hydroxy-2-methylbutyronitrile, forming linamarin and lotaustralin. Also accepts, to some extent, a wide range of potential acceptor substrates, including simple alcohols, flavonoids, isoflavonoids and other hydroxynitriles such as p-hydroxymandelonitrile, mandelonitrile, (E)-4-hydroxy-2-methylbut-2-enenitrile and (E)- 2-(hydroxymethyl)but-2-enenitrile. This chain is Linamarin synthase 1, found in Manihot esculenta (Cassava).